Reading from the N-terminus, the 566-residue chain is Lactase-like protein (566 aa).

Residues 1-20 (MKPVWVIILGWILLVPRVGT) form the signal peptide. At 21 to 540 (AWRGPPEEAS…LLRHMHVASE (520 aa)) the chain is on the extracellular side. N-linked (GlcNAc...) asparagine glycans are attached at residues asparagine 170 and asparagine 244. Residues 541-561 (IVVPTVCALSILTAALMLTLL) traverse the membrane as a helical segment. Residues 562 to 566 (LRRRG) are Cytoplasmic-facing.

The protein belongs to the glycosyl hydrolase 1 family. Klotho subfamily. As to quaternary structure, may form dimers. As to expression, strongly expressed in the lens of the eye, where it localizes to the equatorial epithelium and outer layers of newly extending fiber cells (at protein level). May also be expressed in kidney and skin. However, another study suggests that expression is specific to eye and is minimal in other tissues.

The protein localises to the endoplasmic reticulum membrane. Plays a role in formation of the lens suture in the eye, which is important for normal optical properties of the lens. The chain is Lactase-like protein (Lctl) from Mus musculus (Mouse).